We begin with the raw amino-acid sequence, 432 residues long: Transcobalamin-2 (432 aa).

Positions 1 to 18 are cleaved as a signal peptide; that stretch reads MGHLGALLFLLGGLGALA. Disulfide bonds link cysteine 21/cysteine 270, cysteine 116/cysteine 312, and cysteine 165/cysteine 208. Asparagine 94 carries an N-linked (GlcNAc...) asparagine glycan. Cob(II)alamin is bound by residues glutamine 104, 152–156, histidine 193, 193–197, asparagine 245, serine 248, glutamine 294, and 400–402; these read TSYYQ, HVSVD, and WQV.

It belongs to the eukaryotic cobalamin transport proteins family. In terms of assembly, interacts with CD320 (via LDL-receptor class A domains). Expressed in mammary gland, kidney, lymphatic nodes and liver.

The protein resides in the secreted. Functionally, primary vitamin B12-binding and transport protein. Delivers cobalamin to cells. The sequence is that of Transcobalamin-2 (TCN2) from Bos taurus (Bovine).